Here is a 143-residue protein sequence, read N- to C-terminus: UPF0201 protein Pisl_1658 (143 aa).

The protein belongs to the UPF0201 family.

This Pyrobaculum islandicum (strain DSM 4184 / JCM 9189 / GEO3) protein is UPF0201 protein Pisl_1658.